The sequence spans 100 residues: Small ribosomal subunit protein uS14m (100 aa).

The protein belongs to the universal ribosomal protein uS14 family.

The protein localises to the mitochondrion. The sequence is that of Small ribosomal subunit protein uS14m (RPS14) from Brassica napus (Rape).